A 164-amino-acid chain; its full sequence is 6,7-dimethyl-8-ribityllumazine synthase (164 aa).

Residues F22, 56–58 (AWE), and 80–82 (AVI) each bind 5-amino-6-(D-ribitylamino)uracil. 85–86 (DT) is a binding site for (2S)-2-hydroxy-3-oxobutyl phosphate. Residue H88 is the Proton donor of the active site. L113 provides a ligand contact to 5-amino-6-(D-ribitylamino)uracil. (2S)-2-hydroxy-3-oxobutyl phosphate is bound at residue R127.

This sequence belongs to the DMRL synthase family.

The catalysed reaction is (2S)-2-hydroxy-3-oxobutyl phosphate + 5-amino-6-(D-ribitylamino)uracil = 6,7-dimethyl-8-(1-D-ribityl)lumazine + phosphate + 2 H2O + H(+). Its pathway is cofactor biosynthesis; riboflavin biosynthesis; riboflavin from 2-hydroxy-3-oxobutyl phosphate and 5-amino-6-(D-ribitylamino)uracil: step 1/2. In terms of biological role, catalyzes the formation of 6,7-dimethyl-8-ribityllumazine by condensation of 5-amino-6-(D-ribitylamino)uracil with 3,4-dihydroxy-2-butanone 4-phosphate. This is the penultimate step in the biosynthesis of riboflavin. In Gemmatimonas aurantiaca (strain DSM 14586 / JCM 11422 / NBRC 100505 / T-27), this protein is 6,7-dimethyl-8-ribityllumazine synthase.